Reading from the N-terminus, the 142-residue chain is Large ribosomal subunit protein uL11 (142 aa).

It belongs to the universal ribosomal protein uL11 family. In terms of assembly, part of the ribosomal stalk of the 50S ribosomal subunit. Interacts with L10 and the large rRNA to form the base of the stalk. L10 forms an elongated spine to which L12 dimers bind in a sequential fashion forming a multimeric L10(L12)X complex. Post-translationally, one or more lysine residues are methylated.

Its function is as follows. Forms part of the ribosomal stalk which helps the ribosome interact with GTP-bound translation factors. The polypeptide is Large ribosomal subunit protein uL11 (Stenotrophomonas maltophilia (strain R551-3)).